We begin with the raw amino-acid sequence, 186 residues long: Protein C (186 aa).

Polar residues predominate over residues 1–15; that stretch reads MSKTDWNASGLSRPS. A disordered region spans residues 1–44; sequence MSKTDWNASGLSRPSPSAHWPSRKLWQHGQKYQTTQDRSEPPAG.

This sequence belongs to the morbillivirus protein C family. As to quaternary structure, interacts with the phosphoprotein (via C-terminus); this interaction allows C to associate with the ribonucleocapsid.

Its subcellular location is the host nucleus. It localises to the host cytoplasmic vesicle. In terms of biological role, ribonucleocapsid-associated protein that interacts with the phosphoprotein (P), thereby increasing replication accuracy and processivity of the polymerase complex. The protein is Protein C (P/V/C) of Homo sapiens (Human).